Reading from the N-terminus, the 907-residue chain is Probable dipeptidyl-aminopeptidase B (907 aa).

The segment covering 1 to 26 (MPRQRAPKEEEAELLTKQERSTRSSE) has biased composition (basic and acidic residues). Residues 1 to 70 (MPRQRAPKEE…EKYTDEDDEA (70 aa)) form a disordered region. Topologically, residues 1-93 (MPRQRAPKEE…PVAVDKKTRR (93 aa)) are cytoplasmic. A compositionally biased stretch (low complexity) spans 30–44 (DASVSSISTTSLVLE). The chain crosses the membrane as a helical; Signal-anchor for type II membrane protein span at residues 94-114 (WLWIVGIACVTGWALALVFFL). Residues 115–907 (MSGSYKHVST…SQVDARLERR (793 aa)) are Vacuolar-facing. N560 is a glycosylation site (N-linked (GlcNAc...) asparagine). Catalysis depends on S751, which acts as the Charge relay system. N805 carries N-linked (GlcNAc...) asparagine glycosylation. Residues D828 and H861 each act as charge relay system in the active site.

It belongs to the peptidase S9B family.

The protein resides in the vacuole membrane. It carries out the reaction Release of an N-terminal dipeptide, Xaa-Yaa-|-Zaa-, from a polypeptide, preferentially when Yaa is Pro, provided Zaa is neither Pro nor hydroxyproline.. Type IV dipeptidyl-peptidase which removes N-terminal dipeptides sequentially from polypeptides having unsubstituted N-termini provided that the penultimate residue is proline. The sequence is that of Probable dipeptidyl-aminopeptidase B (dapB) from Pyrenophora teres f. teres (strain 0-1) (Barley net blotch fungus).